The sequence spans 101 residues: Protein RADIALIS-like 2 (101 aa).

The 56-residue stretch at 9-64 (YGSGSWTVKQNKAFERALAVYDQDTPDRWHNVARAVGGKTPEEAKRQYDLLVRDIE) folds into the SANT domain. Residues 69-101 (GHVPFPDYKTTTGNSNRGRLRDEEKRMRSMKLQ) form a disordered region.

As to expression, expressed in the funiculus of ovules and in embryos. In young ovules, expression is observed in the adaxial side of the funiculus (the stalk connecting the embryo sac to the placenta). Also expressed in heart-stage embryos, in the cortex and endodermis of the hypocotyl region but not in the cotyledons, shoot and root apical meristems, provasculature or epidermis. Not detected in young seedlings, mature roots or in young floral primordia.

It localises to the nucleus. Probable transcription factor. Required for female gametophyte development. This Arabidopsis thaliana (Mouse-ear cress) protein is Protein RADIALIS-like 2 (RL2).